The sequence spans 1319 residues: Uromodulin-like 1 (1319 aa).

The N-terminal stretch at 1-22 (MMSRTVRLVLLALACTVDLSQA) is a signal peptide. The Extracellular segment spans residues 23–1273 (SGFTENGLSL…CTKPVLGTGY (1251 aa)). Residues 34–107 (SYQLCSYPVT…FEQLGLYCVL (74 aa)) form the EMI domain. Intrachain disulfides connect Cys-38/Cys-95, Cys-62/Cys-71, and Cys-94/Cys-105. Asn-90 carries N-linked (GlcNAc...) asparagine glycosylation. Asn-110 carries an N-linked (GlcNAc...) asparagine glycan. Residues 115–159 (FASRPGVCPTAEAEPLSPSCSLDTDCSGLQKCCSWPGGRHCVSPT) form the WAP domain. 3 N-linked (GlcNAc...) asparagine glycosylation sites follow: Asn-172, Asn-193, and Asn-243. Positions 265-306 (DVNECLHSELQACSVREQCRNLEGSYQCVSSQRLNHTDEDCP) constitute an EGF-like 1; calcium-binding domain. Intrachain disulfides connect Cys-269/Cys-283 and Cys-277/Cys-292. The Fibronectin type-III 1 domain maps to 307 to 391 (PIRDFVALNV…ATLVVKTDAQ (85 aa)). Residue Asn-315 is glycosylated (N-linked (GlcNAc...) asparagine). One can recognise an SEA 1 domain in the interval 389 to 503 (DAQVFQVTIR…QRTFVQDWDE (115 aa)). One can recognise an EGF-like 2; calcium-binding domain in the interval 500–545 (DWDECAHSSEHDCHPSARCINLEGSYTCQCLTARDASPSRAGRVCE). Cystine bridges form between Cys-504–Cys-518, Cys-512–Cys-527, and Cys-529–Cys-544. 2 disordered regions span residues 569 to 649 (TGIT…ITKD) and 664 to 703 (HSSPTWKTPPNSTRLQNEDPRSSSFPGPPSAPTDVTPESP). Low complexity predominate over residues 619-632 (TGQGQTHGTHQGTT). Over residues 638-647 (TTRESQELIT) the composition is skewed to basic and acidic residues. Residues 664–678 (HSSPTWKTPPNSTRL) show a composition bias toward polar residues. Residues 709-795 (PIGKVTVSNV…QLKVRTVAQK (87 aa)) enclose the Fibronectin type-III 2 domain. N-linked (GlcNAc...) asparagine glycans are attached at residues Asn-717 and Asn-757. An SEA 2 domain is found at 792–904 (VAQKLAGNVR…GKTFMQDYNE (113 aa)). The EGF-like 3; calcium-binding domain occupies 901–945 (DYNECDMKEDDCAPGTCRNTFGSFTCSCDEGGPDSQVEYSGRSCD). 3 disulfide bridges follow: Cys-905–Cys-917, Cys-912–Cys-926, and Cys-928–Cys-944. The tract at residues 939 to 966 (YSGRSCDGDPSGNMTQTPGSEWSPTPAG) is disordered. Over residues 950–961 (GNMTQTPGSEWS) the composition is skewed to polar residues. The N-linked (GlcNAc...) asparagine glycan is linked to Asn-951. The 244-residue stretch at 995 to 1238 (SCEIETVIIT…NSCRISCNDF (244 aa)) folds into the ZP domain. A disulfide bridge connects residues Cys-1160 and Cys-1218. A helical transmembrane segment spans residues 1274–1294 (IILLAAAALLVVAGATTLLIL). The Cytoplasmic segment spans residues 1295-1319 (RYQRVRQKYNLRIQTDDFSYQVFSQ).

It localises to the cell membrane. This chain is Uromodulin-like 1 (Umodl1), found in Mus musculus (Mouse).